The following is a 282-amino-acid chain: Pantothenate synthetase (282 aa).

An ATP-binding site is contributed by 30 to 37; it reads MGYLHEGH. His37 functions as the Proton donor in the catalytic mechanism. Gln61 contacts (R)-pantoate. Residue Gln61 coordinates beta-alanine. ATP is bound at residue 147 to 150; the sequence is GQKD. Gln153 provides a ligand contact to (R)-pantoate. ATP is bound by residues Val176 and 184–187; that span reads MSSR.

Belongs to the pantothenate synthetase family. As to quaternary structure, homodimer.

Its subcellular location is the cytoplasm. The catalysed reaction is (R)-pantoate + beta-alanine + ATP = (R)-pantothenate + AMP + diphosphate + H(+). It participates in cofactor biosynthesis; (R)-pantothenate biosynthesis; (R)-pantothenate from (R)-pantoate and beta-alanine: step 1/1. Its function is as follows. Catalyzes the condensation of pantoate with beta-alanine in an ATP-dependent reaction via a pantoyl-adenylate intermediate. The protein is Pantothenate synthetase of Caldicellulosiruptor bescii (strain ATCC BAA-1888 / DSM 6725 / KCTC 15123 / Z-1320) (Anaerocellum thermophilum).